The sequence spans 324 residues: Olfactory receptor 52N5 (324 aa).

The Extracellular portion of the chain corresponds to 1–33 (MPLFNSLCWFPTIHVTPPSFILNGIPGLERVHV). The chain crosses the membrane as a helical span at residues 34–54 (WISLPLCTMYIIFLVGNLGLV). The Cytoplasmic portion of the chain corresponds to 55–62 (YLIYYEES). Residues 63–84 (LHHPMYFFFGHALSLIDLLTCT) form a helical membrane-spanning segment. Residues 85–108 (TTLPNALCIFWFSLKEINFNACLA) are Extracellular-facing. Cysteines 106 and 198 form a disulfide. The chain crosses the membrane as a helical span at residues 109–129 (QMFFVHGFTGVESGVLMLMAL). Topologically, residues 130–148 (DRYVAICYPLRYATTLTNP) are cytoplasmic. A helical membrane pass occupies residues 149-169 (IIAKAELATFLRGVLLMIPFP). Residues 170–205 (FLVKRLPFCQSNIISHTYCDHMSVVKLSCASIKVNV) lie on the Extracellular side of the membrane. A helical membrane pass occupies residues 206 to 226 (IYGLMVALLIGVFDICCISLS). The Cytoplasmic portion of the chain corresponds to 227 to 246 (YTLILKAAISLSSSDARQKA). A helical membrane pass occupies residues 247 to 267 (FSTCTAHISAIIITYVPAFFT). The Extracellular segment spans residues 268–283 (FFAHRFGGHTIPPSLH). Residues 284 to 304 (IIVANLYLLLPPTLNPIVYGV) form a helical membrane-spanning segment. Topologically, residues 305–324 (KTKQIRKSVIKFFQGDKGAG) are cytoplasmic.

This sequence belongs to the G-protein coupled receptor 1 family.

Its subcellular location is the cell membrane. Functionally, odorant receptor. The polypeptide is Olfactory receptor 52N5 (OR52N5) (Homo sapiens (Human)).